A 329-amino-acid polypeptide reads, in one-letter code: 4-hydroxythreonine-4-phosphate dehydrogenase (329 aa).

Residues H136 and T137 each coordinate substrate. Positions 166, 211, and 266 each coordinate a divalent metal cation. K274, N283, and R292 together coordinate substrate.

This sequence belongs to the PdxA family. Homodimer. Requires Zn(2+) as cofactor. The cofactor is Mg(2+). It depends on Co(2+) as a cofactor.

The protein resides in the cytoplasm. It carries out the reaction 4-(phosphooxy)-L-threonine + NAD(+) = 3-amino-2-oxopropyl phosphate + CO2 + NADH. It participates in cofactor biosynthesis; pyridoxine 5'-phosphate biosynthesis; pyridoxine 5'-phosphate from D-erythrose 4-phosphate: step 4/5. Functionally, catalyzes the NAD(P)-dependent oxidation of 4-(phosphooxy)-L-threonine (HTP) into 2-amino-3-oxo-4-(phosphooxy)butyric acid which spontaneously decarboxylates to form 3-amino-2-oxopropyl phosphate (AHAP). This chain is 4-hydroxythreonine-4-phosphate dehydrogenase, found in Escherichia coli O17:K52:H18 (strain UMN026 / ExPEC).